Consider the following 253-residue polypeptide: Imidazole glycerol phosphate synthase subunit HisF (253 aa).

Catalysis depends on residues D11 and D130.

Belongs to the HisA/HisF family. In terms of assembly, heterodimer of HisH and HisF.

The protein resides in the cytoplasm. It catalyses the reaction 5-[(5-phospho-1-deoxy-D-ribulos-1-ylimino)methylamino]-1-(5-phospho-beta-D-ribosyl)imidazole-4-carboxamide + L-glutamine = D-erythro-1-(imidazol-4-yl)glycerol 3-phosphate + 5-amino-1-(5-phospho-beta-D-ribosyl)imidazole-4-carboxamide + L-glutamate + H(+). It participates in amino-acid biosynthesis; L-histidine biosynthesis; L-histidine from 5-phospho-alpha-D-ribose 1-diphosphate: step 5/9. In terms of biological role, IGPS catalyzes the conversion of PRFAR and glutamine to IGP, AICAR and glutamate. The HisF subunit catalyzes the cyclization activity that produces IGP and AICAR from PRFAR using the ammonia provided by the HisH subunit. This is Imidazole glycerol phosphate synthase subunit HisF from Ruegeria pomeroyi (strain ATCC 700808 / DSM 15171 / DSS-3) (Silicibacter pomeroyi).